The primary structure comprises 434 residues: ATP-dependent RNA helicase sub2 (434 aa).

The short motif at 59–87 (TGFRDFLLKGELLRAITDCGFEHPSEVQQ) is the Q motif element. The Helicase ATP-binding domain occupies 90–265 (IPTAILNVDV…KKFMRNPLEV (176 aa)). 103 to 110 (AKSGLGKT) contacts ATP. The DECD box motif lies at 212 to 215 (DECD). Positions 293 to 430 (KLNELLDSLE…EYPEEGVDSS (138 aa)) constitute a Helicase C-terminal domain.

Belongs to the DEAD box helicase family. DECD subfamily.

It is found in the nucleus. The enzyme catalyses ATP + H2O = ADP + phosphate + H(+). ATP-binding RNA helicase involved in transcription elongation and required for the export of mRNA out of the nucleus. SUB2 also plays a role in pre-mRNA splicing and spliceosome assembly. May be involved in rDNA and telomeric silencing, and maintenance of genome integrity. In Emericella nidulans (strain FGSC A4 / ATCC 38163 / CBS 112.46 / NRRL 194 / M139) (Aspergillus nidulans), this protein is ATP-dependent RNA helicase sub2 (sub2).